Here is a 213-residue protein sequence, read N- to C-terminus: MKTSIAIVDYGMGNLRSVAQALKKAEPAADVAIVDTPAAIRAADRVVLPGQGAMPDCMRSLGESGLQEAVIEASRTKPLLGVCVGEQMLFDWSAEGDTKGLGLLPGKVVRFELDGRLQDDGSRFKVPQMGWNRVRQSQPHPLWDGVPDDAYFYFVHSYYVTPDNPAHTVGETAYGAPFTSAVARDNLFATQFHPEKSAEVGLRLYRNFVHWKP.

Residues 4–213 (SIAIVDYGMG…LYRNFVHWKP (210 aa)) form the Glutamine amidotransferase type-1 domain. The Nucleophile role is filled by Cys83. Active-site residues include His193 and Glu195.

In terms of assembly, heterodimer of HisH and HisF.

It localises to the cytoplasm. It catalyses the reaction 5-[(5-phospho-1-deoxy-D-ribulos-1-ylimino)methylamino]-1-(5-phospho-beta-D-ribosyl)imidazole-4-carboxamide + L-glutamine = D-erythro-1-(imidazol-4-yl)glycerol 3-phosphate + 5-amino-1-(5-phospho-beta-D-ribosyl)imidazole-4-carboxamide + L-glutamate + H(+). It carries out the reaction L-glutamine + H2O = L-glutamate + NH4(+). Its pathway is amino-acid biosynthesis; L-histidine biosynthesis; L-histidine from 5-phospho-alpha-D-ribose 1-diphosphate: step 5/9. Its function is as follows. IGPS catalyzes the conversion of PRFAR and glutamine to IGP, AICAR and glutamate. The HisH subunit catalyzes the hydrolysis of glutamine to glutamate and ammonia as part of the synthesis of IGP and AICAR. The resulting ammonia molecule is channeled to the active site of HisF. This chain is Imidazole glycerol phosphate synthase subunit HisH, found in Burkholderia lata (strain ATCC 17760 / DSM 23089 / LMG 22485 / NCIMB 9086 / R18194 / 383).